Consider the following 895-residue polypeptide: DNA mismatch repair protein MutS (895 aa).

632-639 (GPNMAGKS) is an ATP binding site. Residues 824-849 (VTQDKKQVKKQTKNNHSARSGSRQQQ) form a disordered region. A compositionally biased stretch (polar residues) spans 837 to 849 (NNHSARSGSRQQQ).

This sequence belongs to the DNA mismatch repair MutS family.

In terms of biological role, this protein is involved in the repair of mismatches in DNA. It is possible that it carries out the mismatch recognition step. This protein has a weak ATPase activity. This Desulforapulum autotrophicum (strain ATCC 43914 / DSM 3382 / VKM B-1955 / HRM2) (Desulfobacterium autotrophicum) protein is DNA mismatch repair protein MutS.